The following is a 249-amino-acid chain: 3-deoxy-manno-octulosonate cytidylyltransferase (249 aa).

The protein belongs to the KdsB family.

Its subcellular location is the cytoplasm. It carries out the reaction 3-deoxy-alpha-D-manno-oct-2-ulosonate + CTP = CMP-3-deoxy-beta-D-manno-octulosonate + diphosphate. It functions in the pathway nucleotide-sugar biosynthesis; CMP-3-deoxy-D-manno-octulosonate biosynthesis; CMP-3-deoxy-D-manno-octulosonate from 3-deoxy-D-manno-octulosonate and CTP: step 1/1. The protein operates within bacterial outer membrane biogenesis; lipopolysaccharide biosynthesis. Functionally, activates KDO (a required 8-carbon sugar) for incorporation into bacterial lipopolysaccharide in Gram-negative bacteria. This Coxiella burnetii (strain RSA 331 / Henzerling II) protein is 3-deoxy-manno-octulosonate cytidylyltransferase.